Reading from the N-terminus, the 393-residue chain is NAD(P)H-quinone oxidoreductase subunit H, chloroplastic (393 aa).

This sequence belongs to the complex I 49 kDa subunit family. In terms of assembly, NDH is composed of at least 16 different subunits, 5 of which are encoded in the nucleus.

The protein localises to the plastid. It localises to the chloroplast thylakoid membrane. The enzyme catalyses a plastoquinone + NADH + (n+1) H(+)(in) = a plastoquinol + NAD(+) + n H(+)(out). The catalysed reaction is a plastoquinone + NADPH + (n+1) H(+)(in) = a plastoquinol + NADP(+) + n H(+)(out). In terms of biological role, NDH shuttles electrons from NAD(P)H:plastoquinone, via FMN and iron-sulfur (Fe-S) centers, to quinones in the photosynthetic chain and possibly in a chloroplast respiratory chain. The immediate electron acceptor for the enzyme in this species is believed to be plastoquinone. Couples the redox reaction to proton translocation, and thus conserves the redox energy in a proton gradient. This is NAD(P)H-quinone oxidoreductase subunit H, chloroplastic from Nuphar advena (Common spatterdock).